The chain runs to 642 residues: 1-deoxy-D-xylulose-5-phosphate synthase 2 (642 aa).

Residues His73 and 113–115 (SHA) contribute to the thiamine diphosphate site. Asp144 lines the Mg(2+) pocket. Thiamine diphosphate is bound by residues 145-146 (GA), Asn174, Tyr285, and Glu366. Asn174 lines the Mg(2+) pocket.

It belongs to the transketolase family. DXPS subfamily. In terms of assembly, homodimer. Mg(2+) serves as cofactor. Requires thiamine diphosphate as cofactor.

It catalyses the reaction D-glyceraldehyde 3-phosphate + pyruvate + H(+) = 1-deoxy-D-xylulose 5-phosphate + CO2. The protein operates within metabolic intermediate biosynthesis; 1-deoxy-D-xylulose 5-phosphate biosynthesis; 1-deoxy-D-xylulose 5-phosphate from D-glyceraldehyde 3-phosphate and pyruvate: step 1/1. Functionally, catalyzes the acyloin condensation reaction between C atoms 2 and 3 of pyruvate and glyceraldehyde 3-phosphate to yield 1-deoxy-D-xylulose-5-phosphate (DXP). The protein is 1-deoxy-D-xylulose-5-phosphate synthase 2 of Streptomyces avermitilis (strain ATCC 31267 / DSM 46492 / JCM 5070 / NBRC 14893 / NCIMB 12804 / NRRL 8165 / MA-4680).